The primary structure comprises 542 residues: Esterase S (542 aa).

A signal peptide spans 1 to 22 (MTQILLPIALLCLFAASTLSNP). A disulfide bond links C81 and C100. N-linked (GlcNAc...) asparagine glycosylation occurs at N110. Residue S204 is the Acyl-ester intermediate of the active site. A disulfide bond links C256 and C268. N396 is a glycosylation site (N-linked (GlcNAc...) asparagine). A disulfide bond links C507 and C528.

Belongs to the type-B carboxylesterase/lipase family. In terms of assembly, monomer. In terms of tissue distribution, specifically expressed in the ejaculatory bulbs of male.

The protein localises to the secreted. The enzyme catalyses a carboxylic ester + H2O = an alcohol + a carboxylate + H(+). Functionally, transferred from the ejaculatory bulbs of males to the female genitals upon copulation, plays an important role in the reproductive biology. The sequence is that of Esterase S (EstS) from Drosophila virilis (Fruit fly).